The sequence spans 173 residues: Crossover junction endodeoxyribonuclease RuvC (173 aa).

Active-site residues include Asp-8, Glu-67, and Asp-139. Mg(2+) contacts are provided by Asp-8, Glu-67, and Asp-139.

Belongs to the RuvC family. As to quaternary structure, homodimer which binds Holliday junction (HJ) DNA. The HJ becomes 2-fold symmetrical on binding to RuvC with unstacked arms; it has a different conformation from HJ DNA in complex with RuvA. In the full resolvosome a probable DNA-RuvA(4)-RuvB(12)-RuvC(2) complex forms which resolves the HJ. Mg(2+) serves as cofactor.

The protein localises to the cytoplasm. It catalyses the reaction Endonucleolytic cleavage at a junction such as a reciprocal single-stranded crossover between two homologous DNA duplexes (Holliday junction).. The RuvA-RuvB-RuvC complex processes Holliday junction (HJ) DNA during genetic recombination and DNA repair. Endonuclease that resolves HJ intermediates. Cleaves cruciform DNA by making single-stranded nicks across the HJ at symmetrical positions within the homologous arms, yielding a 5'-phosphate and a 3'-hydroxyl group; requires a central core of homology in the junction. The consensus cleavage sequence is 5'-(A/T)TT(C/G)-3'. Cleavage occurs on the 3'-side of the TT dinucleotide at the point of strand exchange. HJ branch migration catalyzed by RuvA-RuvB allows RuvC to scan DNA until it finds its consensus sequence, where it cleaves and resolves the cruciform DNA. This chain is Crossover junction endodeoxyribonuclease RuvC, found in Photobacterium profundum (strain SS9).